The following is a 312-amino-acid chain: MEVDSNSSSGSFILMGVSDHPHLEIIFFAVILASYLLTLVGNLTIILLSRLDARLHTPMYFFLSNLSSLDLAFTTSSVPQMLKNLWGPDKTISYGGCVTQLYVFLWLGATECILLVVMAFDRYVAVCRPLHYMTVMNPRLCWGLAAISWLGGLGNSVIQSTFTLQLPFCGHRKVDNFLCEVPAMIKLACGDTSLNEAVLNGVCTFFTVVPVSVILVSYCFIAQAVMKIRSVEGRRKAFNTCVSHLVVVFLFYGSAIYGYLLPAKSSNQSQGKFISLFYSVVTPMVNPLIYTLRNKEVKGALGRLLGKGRGAS.

Residues Met-1–Glu-24 are Extracellular-facing. Asn-6 is a glycosylation site (N-linked (GlcNAc...) asparagine). Residues Ile-25 to Leu-48 traverse the membrane as a helical segment. The Cytoplasmic segment spans residues Ser-49–Thr-57. Residues Pro-58–Pro-79 traverse the membrane as a helical segment. Over Gln-80 to Gln-100 the chain is Extracellular. Cys-97 and Cys-189 are joined by a disulfide. The chain crosses the membrane as a helical span at residues Leu-101–Phe-120. Residues Asp-121–Arg-139 lie on the Cytoplasmic side of the membrane. Residues Leu-140–Ser-160 form a helical membrane-spanning segment. The Extracellular segment spans residues Thr-161–Asn-200. A helical transmembrane segment spans residues Gly-201–Ala-222. At Gln-223 to Lys-236 the chain is on the cytoplasmic side. The helical transmembrane segment at Ala-237–Leu-261 threads the bilayer. Topologically, residues Pro-262–Lys-272 are extracellular. A helical transmembrane segment spans residues Phe-273–Leu-292. Residues Arg-293–Ser-312 lie on the Cytoplasmic side of the membrane.

The protein belongs to the G-protein coupled receptor 1 family. Olfactory epithelium. Present in various subcellular compartments of the olfactory sensory neurons, particularly in the axonal processes and neve terminals.

The protein resides in the cell membrane. Its function is as follows. Olfactory receptor that is activated by the binding of organosulfur odorants with thioether groups such as (methylthio)methanetiol (MTMT). Also binds odorants acetophenone and benzaldehyde. The activity of this receptor is mediated by G proteins which activate adenylyl cyclase. May be involved in the molecular processes underlying fasciculation and targeting of olfactory axons. In Mus musculus (Mouse), this protein is Olfactory receptor 2C1.